Consider the following 957-residue polypeptide: Glycine dehydrogenase (decarboxylating) (957 aa).

Lys-708 bears the N6-(pyridoxal phosphate)lysine mark.

The protein belongs to the GcvP family. In terms of assembly, the glycine cleavage system is composed of four proteins: P, T, L and H. Pyridoxal 5'-phosphate serves as cofactor.

It carries out the reaction N(6)-[(R)-lipoyl]-L-lysyl-[glycine-cleavage complex H protein] + glycine + H(+) = N(6)-[(R)-S(8)-aminomethyldihydrolipoyl]-L-lysyl-[glycine-cleavage complex H protein] + CO2. The glycine cleavage system catalyzes the degradation of glycine. The P protein binds the alpha-amino group of glycine through its pyridoxal phosphate cofactor; CO(2) is released and the remaining methylamine moiety is then transferred to the lipoamide cofactor of the H protein. The sequence is that of Glycine dehydrogenase (decarboxylating) from Shigella dysenteriae serotype 1 (strain Sd197).